We begin with the raw amino-acid sequence, 300 residues long: 4-hydroxy-tetrahydrodipicolinate synthase (300 aa).

T57 is a pyruvate binding site. The active-site Proton donor/acceptor is the Y145. Residue K173 is the Schiff-base intermediate with substrate of the active site. Pyruvate is bound at residue I213.

Belongs to the DapA family. In terms of assembly, homotetramer; dimer of dimers.

Its subcellular location is the cytoplasm. The catalysed reaction is L-aspartate 4-semialdehyde + pyruvate = (2S,4S)-4-hydroxy-2,3,4,5-tetrahydrodipicolinate + H2O + H(+). The protein operates within amino-acid biosynthesis; L-lysine biosynthesis via DAP pathway; (S)-tetrahydrodipicolinate from L-aspartate: step 3/4. Its function is as follows. Catalyzes the condensation of (S)-aspartate-beta-semialdehyde [(S)-ASA] and pyruvate to 4-hydroxy-tetrahydrodipicolinate (HTPA). This Corynebacterium urealyticum (strain ATCC 43042 / DSM 7109) protein is 4-hydroxy-tetrahydrodipicolinate synthase.